Consider the following 419-residue polypeptide: MNIIDELEWRGAIYQQTDEEGLRKWVEEKQISLYCGIDPSGDSMHIGHLIPFMILRRFQNAGHRPIILVGGATGTIGDPSGKKEERKLQSMEQISKNVESLRVQLGKIFDFEGNSAASMVNNYDWTKDVSILDFLRDYGKEFNVNTMLSKDIVASRLEVGISFTEFAYQILQAMDFNHLYEFNDCRLQIGGSDQWGNITAGLDLIRKKQGENAKAFGLTIPLLTKADGTKFGKSEGGAIWLNPEKTTPYEFYQFWINTDDRDVVKYLKYFTFLTEAEIDELAKQVETEPHLRAAQKTLAAEMTKFVHSEEALEQALKISKALFSGDVKALTADEIEQGFKDVPTFVAEDTEANLVDWLVTLGIEPSKRQAREDVANGAIYINGERQQDLEKIMDASDRIENKFTIVRRGKKKYFLVSYK.

Tyr-34 provides a ligand contact to L-tyrosine. The short motif at 39-48 (PSGDSMHIGH) is the 'HIGH' region element. L-tyrosine contacts are provided by Tyr-168 and Gln-172. Positions 230-234 (KFGKS) match the 'KMSKS' region motif. Lys-233 serves as a coordination point for ATP. The region spanning 352–418 (ANLVDWLVTL…GKKKYFLVSY (67 aa)) is the S4 RNA-binding domain.

This sequence belongs to the class-I aminoacyl-tRNA synthetase family. TyrS type 1 subfamily. Homodimer.

The protein localises to the cytoplasm. The enzyme catalyses tRNA(Tyr) + L-tyrosine + ATP = L-tyrosyl-tRNA(Tyr) + AMP + diphosphate + H(+). Its function is as follows. Catalyzes the attachment of tyrosine to tRNA(Tyr) in a two-step reaction: tyrosine is first activated by ATP to form Tyr-AMP and then transferred to the acceptor end of tRNA(Tyr). This is Tyrosine--tRNA ligase from Listeria monocytogenes serotype 4b (strain F2365).